A 180-amino-acid chain; its full sequence is tRNA (cytidine(56)-2'-O)-methyltransferase (180 aa).

S-adenosyl-L-methionine is bound by residues L83, 115 to 119, and 133 to 140; these read GAEKV and VGNQPHSE.

This sequence belongs to the aTrm56 family. As to quaternary structure, homodimer.

Its subcellular location is the cytoplasm. It carries out the reaction cytidine(56) in tRNA + S-adenosyl-L-methionine = 2'-O-methylcytidine(56) in tRNA + S-adenosyl-L-homocysteine + H(+). Its function is as follows. Specifically catalyzes the AdoMet-dependent 2'-O-ribose methylation of cytidine at position 56 in tRNAs. This is tRNA (cytidine(56)-2'-O)-methyltransferase from Methanococcus aeolicus (strain ATCC BAA-1280 / DSM 17508 / OCM 812 / Nankai-3).